The following is a 273-amino-acid chain: Putative phosphoenolpyruvate synthase regulatory protein (273 aa).

153–160 (GVSRSGKT) is a binding site for ADP.

The protein belongs to the pyruvate, phosphate/water dikinase regulatory protein family. PSRP subfamily.

It catalyses the reaction [pyruvate, water dikinase] + ADP = [pyruvate, water dikinase]-phosphate + AMP + H(+). It carries out the reaction [pyruvate, water dikinase]-phosphate + phosphate + H(+) = [pyruvate, water dikinase] + diphosphate. In terms of biological role, bifunctional serine/threonine kinase and phosphorylase involved in the regulation of the phosphoenolpyruvate synthase (PEPS) by catalyzing its phosphorylation/dephosphorylation. This is Putative phosphoenolpyruvate synthase regulatory protein from Polaromonas sp. (strain JS666 / ATCC BAA-500).